The sequence spans 1143 residues: MEAAAMAVTAATGALAPVLVKLAALLDDGECNLLEGSRSDAEFIRSELEAVHSLLTPNILGRMGDDDAACKDGLIAEVRELSYDLDDAVDDFLELNFEQRRSASPFGELKARVEERVSNRFSDWKLPAASLPPSSVHRRAGLPPPDAGLVGMHKRKEELIELLEQGSSDASRWRKRKPHVPLRIMGGEMQKIVFKIPMVDDKSRTKAMSLVASTVGVHSVAIAGDLRDEVVVVGDGIDSINLVSALRKKVGHAELLQVSQVKEDVKEITAMLAPVKSICEFHEVKTICILGLPGGGKTTIARVLYHALGTQFQCRVFASISPSSSPSPNLTETLADIFAQAQLGVTDTLSTPYGGSGTGRALQQHLIDNISAFLLNKKYLIVIDDIWHWEEWEVIRKSIPKNDLGGRIIMTTRLNSIAEKCHTDDNDVFVYEVGDLDNNDALSLSWGIATKSGAGNRIGTGEDNSCYDIVNMCYGMPLALIWLSSALVGEIEELGGAEVKKCRDLRHIEDGILDIPSLQPLAESLCLGYNHLPLYLRTLLLYCSAYHWSNRIERGRLVRRWIAEGFVSEEKEAEGYFGELINRGWITQHGDNNSYNYYEIHPVMLAFLRCKSKEYNFLTCLGLGSDTSTSASSPRLIRRLSLQGGYPVDCLSSMSMDVSHTCSLVVLGDVARPKGIPFYMFKRLRVLDLEDNKDIQDSHLQGICEQLSLRVRYLGLKGTRIRKLPQEMRKLKHLEILYVGSTRISELPQEIGELKHLRILDVRNTDITELPLQIRELQHLHTLDVRNTPISELPPQVGKLQNLKIMCVRSTGVRELPKEIGELNHLQTLDVRNTRVRELPWQAGQISQSLRVLAGDSGDGVRLPEGVCEALINGIPGATRAKCREVLSIAIIDRFGPPLVGIFKVPGSHMRIPKMIKDHFRVLSCLDIRLCHKLEDDDQKFLAEMPNLQTLVLRFEALPRQPITINGTGFQMLESFRVDSRLPRIAFHEDAMPNLKLLEFKFYAGPASNDAIGITNLKSLQKVVFRCSPWYKSDAPGISATIDVVKKEAEEHPNRPITLLINAGYKEISTESHGSSENIAGSSGIDTEPAQAQHDNLPAVRDDYKGKGILLDGRCPTCGRATKIEEETQDRVADIEIQTETTS.

Residues 1-190 (MEAAAMAVTA…PLRIMGGEMQ (190 aa)) are structured coiled coil (CC) domain. Positions 189–258 (MQKIVFKIPM…KVGHAELLQV (70 aa)) constitute an HMA domain. The segment at 191-264 (KIVFKIPMVD…LLQVSQVKED (74 aa)) is HMA-like domain. The NB-ARC domain occupies 282–570 (HEVKTICILG…WIAEGFVSEE (289 aa)). LRR repeat units lie at residues 681-706 (FKRLRVLDLEDNKDIQDSHLQGICEQ), 708-731 (SLRVRYLGLKGTRIRKLPQEMRKL), 732-754 (KHLEILYVGSTRISELPQEIGEL), 756-777 (HLRILDVRNTDITELPLQIREL), 778-800 (QHLHTLDVRNTPISELPPQVGKL), 802-823 (NLKIMCVRSTGVRELPKEIGEL), 824-848 (NHLQTLDVRNTRVRELPWQAGQISQ), 945-968 (MPNLQTLVLRFEALPRQPITINGT), 979-1002 (DSRLPRIAFHEDAMPNLKLLEFKF), and 1004-1027 (AGPASNDAIGITNLKSLQKVVFRC).

The protein belongs to the disease resistance NB-LRR family. In terms of assembly, interacts with AVR-Pik through its N-terminal part containing the HMA-like domain.

Functionally, disease resistance (R) protein that specifically recognizes the AVR-Pik effector avirulence protein from M.oryzae. Resistance proteins guard the plant against pathogens that contain an appropriate avirulence protein via an indirect interaction with this avirulence protein. That triggers a defense system including the hypersensitive response, which restricts the pathogen growth. Contribution of Pik-2 is required to recognize the effector avirulence protein AVR-Pik. This is Disease resistance protein Pik-1 from Oryza sativa subsp. japonica (Rice).